Reading from the N-terminus, the 225-residue chain is Techylectin-like protein (225 aa).

A Fibrinogen C-terminal domain is found at cysteine 32 to lysine 225. Cysteine 41 and cysteine 60 are joined by a disulfide. A Cell attachment site motif is present at residues arginine 75 to aspartate 77. Aspartate 164 and threonine 170 together coordinate Ca(2+). Cysteine 172 and cysteine 185 are joined by a disulfide.

Expressed by the venom gland.

The protein localises to the secreted. Lectin involved in innate immunity. This is Techylectin-like protein from Phoneutria nigriventer (Brazilian armed spider).